Consider the following 650-residue polypeptide: Hemocyanin subunit 2 (650 aa).

Residues Ser120 and Ser172 are each glycosylated (O-linked (GalNAc...) serine). 3 residues coordinate Cu cation: His193, His197, and His225. Asn309 is a glycosylation site (N-linked (GlcNAc...) asparagine). The Cu cation site is built by His344, His348, and His384.

This sequence belongs to the tyrosinase family. Hemocyanin subfamily. Hexamer of a number of different chains, of which five have been identified. In terms of processing, contains one N-glycosylated and three O-glycosylated residues. The position of one of the O-glycosylated residues has not been determined. Post-translationally, O-linked glycan at Ser-120 may be composed of two GalNAc, three Gal, and two N-acetylneuraminic acid units for a total 1525-Da MW. In terms of tissue distribution, hemolymph.

It localises to the secreted. The protein localises to the extracellular space. Functionally, hemocyanins are copper-containing oxygen carriers occurring freely dissolved in the hemolymph of many mollusks and arthropods. This is Hemocyanin subunit 2 from Carcinus aestuarii (Green crab).